Reading from the N-terminus, the 61-residue chain is UPF0434 protein PSEEN1604 (61 aa).

Belongs to the UPF0434 family.

The polypeptide is UPF0434 protein PSEEN1604 (Pseudomonas entomophila (strain L48)).